The primary structure comprises 231 residues: 7-cyano-7-deazaguanine synthase (231 aa).

8-18 (FSGGQDSTTCL) lines the ATP pocket. Residues Cys188, Cys197, Cys200, and Cys203 each contribute to the Zn(2+) site.

The protein belongs to the QueC family. Zn(2+) serves as cofactor.

It catalyses the reaction 7-carboxy-7-deazaguanine + NH4(+) + ATP = 7-cyano-7-deazaguanine + ADP + phosphate + H2O + H(+). The protein operates within purine metabolism; 7-cyano-7-deazaguanine biosynthesis. Catalyzes the ATP-dependent conversion of 7-carboxy-7-deazaguanine (CDG) to 7-cyano-7-deazaguanine (preQ(0)). This Escherichia coli (strain SE11) protein is 7-cyano-7-deazaguanine synthase.